A 619-amino-acid chain; its full sequence is DNA mismatch repair protein MutL (619 aa).

The span at 364–375 shows a compositional bias: low complexity; the sequence is EPASAREPAAPR. Positions 364-399 are disordered; sequence EPASAREPAAPRYSTSSGATGGRQPAASWPHAQPGY.

It belongs to the DNA mismatch repair MutL/HexB family.

Functionally, this protein is involved in the repair of mismatches in DNA. It is required for dam-dependent methyl-directed DNA mismatch repair. May act as a 'molecular matchmaker', a protein that promotes the formation of a stable complex between two or more DNA-binding proteins in an ATP-dependent manner without itself being part of a final effector complex. This chain is DNA mismatch repair protein MutL, found in Citrobacter koseri (strain ATCC BAA-895 / CDC 4225-83 / SGSC4696).